The primary structure comprises 53 residues: Small ribosomal subunit protein uS14 (53 aa).

The Zn(2+) site is built by C17, C20, C36, and C39.

This sequence belongs to the universal ribosomal protein uS14 family. Zinc-binding uS14 subfamily. In terms of assembly, part of the 30S ribosomal subunit. Zn(2+) serves as cofactor.

In terms of biological role, binds 16S rRNA, required for the assembly of 30S particles. The protein is Small ribosomal subunit protein uS14 of Methanocaldococcus jannaschii (strain ATCC 43067 / DSM 2661 / JAL-1 / JCM 10045 / NBRC 100440) (Methanococcus jannaschii).